A 532-amino-acid polypeptide reads, in one-letter code: Neutral amino acid transporter A (532 aa).

Position 1 is an N-acetylmethionine (methionine 1). The interval 1 to 29 (MEKSGETNGYLDGTQAEPAAGPRTPETAM) is disordered. The Cytoplasmic portion of the chain corresponds to 1–41 (MEKSGETNGYLDGTQAEPAAGPRTPETAMGKSQRCASFFRR). Transmembrane regions (helical) follow at residues 42-62 (HALV…GAAL), 88-108 (MIIL…LDAS), and 119-139 (AYFG…AFII). Topologically, residues 140 to 216 (KPGAGAQTLQ…VTKEKIPVVT (77 aa)) are extracellular. N-linked (GlcNAc...) asparagine glycosylation is found at asparagine 201 and asparagine 206. 6 helical membrane-spanning segments follow: residues 217-237 (DVEG…GVAL), 257-277 (ATMV…MFLI), 298-318 (IFAS…LVYF), 328-348 (FLLG…SSAT), 373-393 (IGAT…AVFI), and 418-438 (VGAA…LEAI). A disordered region spans residues 495-532 (EAIPNSKSEEETSPLVTHQNPAGPVAIAPELESKESVL). A phosphoserine mark is found at serine 507, serine 527, and serine 530.

It belongs to the dicarboxylate/amino acid:cation symporter (DAACS) (TC 2.A.23) family. SLC1A4 subfamily.

Its subcellular location is the membrane. It localises to the melanosome. It catalyses the reaction L-threonine(in) + Na(+)(in) = L-threonine(out) + Na(+)(out). The enzyme catalyses L-serine(in) + Na(+)(in) = L-serine(out) + Na(+)(out). It carries out the reaction L-cysteine(in) + Na(+)(in) = L-cysteine(out) + Na(+)(out). The catalysed reaction is L-alanine(in) + Na(+)(in) = L-alanine(out) + Na(+)(out). It catalyses the reaction L-proline(in) + Na(+)(in) = L-proline(out) + Na(+)(out). The enzyme catalyses 4-hydroxy-L-proline(in) + Na(+)(in) = 4-hydroxy-L-proline(out) + Na(+)(out). Its function is as follows. Sodium-dependent neutral amino-acid transporter that mediates transport of alanine, serine, cysteine, proline, hydroxyproline and threonine. The protein is Neutral amino acid transporter A (Slc1a4) of Mus musculus (Mouse).